The following is a 275-amino-acid chain: Non-heme chloroperoxidase CPO-A1 (275 aa).

The AB hydrolase-1 domain occupies 22 to 255 (PVVFIHGWPL…KVYEGSSHGI (234 aa)). Catalysis depends on charge relay system residues Ser95, Asp224, and His253.

This sequence belongs to the AB hydrolase superfamily. Bacterial non-heme haloperoxidase / perhydrolase family. As to quaternary structure, homodimer.

With respect to regulation, brominating activity not inhibited by azide, peroxidase activity stimulated by bromide. Functionally, may be a chlorinating enzyme involved in 7-chlorotetracycline biosynthesis. Able to brominate as well. In Kitasatospora aureofaciens (Streptomyces aureofaciens), this protein is Non-heme chloroperoxidase CPO-A1 (bpoA1).